Reading from the N-terminus, the 607-residue chain is Elongation factor 4 (607 aa).

The tr-type G domain occupies 11-193 (EKIRNFSIIA…QIVEKVPAPT (183 aa)). Residues 23 to 28 (DHGKST) and 140 to 143 (NKID) contribute to the GTP site.

Belongs to the TRAFAC class translation factor GTPase superfamily. Classic translation factor GTPase family. LepA subfamily.

The protein localises to the cell membrane. It carries out the reaction GTP + H2O = GDP + phosphate + H(+). Functionally, required for accurate and efficient protein synthesis under certain stress conditions. May act as a fidelity factor of the translation reaction, by catalyzing a one-codon backward translocation of tRNAs on improperly translocated ribosomes. Back-translocation proceeds from a post-translocation (POST) complex to a pre-translocation (PRE) complex, thus giving elongation factor G a second chance to translocate the tRNAs correctly. Binds to ribosomes in a GTP-dependent manner. The protein is Elongation factor 4 of Streptococcus gordonii (strain Challis / ATCC 35105 / BCRC 15272 / CH1 / DL1 / V288).